We begin with the raw amino-acid sequence, 246 residues long: tRNA (guanine-N(1)-)-methyltransferase (246 aa).

S-adenosyl-L-methionine-binding positions include G114 and I134 to L139.

Belongs to the RNA methyltransferase TrmD family. Homodimer.

It is found in the cytoplasm. It catalyses the reaction guanosine(37) in tRNA + S-adenosyl-L-methionine = N(1)-methylguanosine(37) in tRNA + S-adenosyl-L-homocysteine + H(+). Specifically methylates guanosine-37 in various tRNAs. In Coxiella burnetii (strain RSA 331 / Henzerling II), this protein is tRNA (guanine-N(1)-)-methyltransferase.